A 350-amino-acid polypeptide reads, in one-letter code: uncharacterized protein (350 aa).

Residues 171-334 enclose the OBG-type G domain; that stretch reads PTVVIAGYPN…LKERLKKIAI (164 aa). GTP is bound by residues 177-184, 219-223, and 286-289; these read GYPNVGKS, DTPGL, and NKID.

Belongs to the TRAFAC class OBG-HflX-like GTPase superfamily. OBG GTPase family. NOG subfamily.

This is an uncharacterized protein from Methanocaldococcus jannaschii (strain ATCC 43067 / DSM 2661 / JAL-1 / JCM 10045 / NBRC 100440) (Methanococcus jannaschii).